The chain runs to 181 residues: MEPEIKIVNVVVSTQIGTDIDLEYAADILDNAEYEPEQFPGLVCRLSDPKVALLIFRSGKLNCTGAKSKEDAEIAIKKIIKELKEAGMEIIDNPVVSVQNMVATTELGMEPNLDDISTLECTEYEPEQFPGLVYRLSDPKVVVLIFGSGKVVITGLKVIEDAYIAFDKISATLKELEQELY.

2 consecutive repeat copies span residues isoleucine 7 to leucine 83 and valine 98 to leucine 173.

The protein belongs to the TBP family.

In terms of biological role, general factor that plays a role in the activation of archaeal genes transcribed by RNA polymerase. Binds specifically to the TATA box promoter element which lies close to the position of transcription initiation. The chain is TATA-box-binding protein from Methanococcus vannielii (strain ATCC 35089 / DSM 1224 / JCM 13029 / OCM 148 / SB).